A 273-amino-acid chain; its full sequence is Protein PERCC1 (273 aa).

Disordered regions lie at residues 18-84 (SHES…PETP) and 253-273 (GGSE…LAEV). Acidic residues predominate over residues 28–56 (EAPEISEEEEEEEEEEEEEEEEEEVDQDQ). Positions 67–83 (DSQSSGVVPQDPSSPET) are enriched in polar residues.

Specifically expressed in the stomach, pancreas and intestine. In gastrointestinal tissue, expression is primarily restricted to gastric G cells and duodenal enteroendocrine cells (EECs).

Plays a critical role in intestinal function by promoting the development of enteroendocrine cells (EECs) of the gastrointestinal tract and pancreas. It is thereby required for normal enteroendocrine peptide hormone secretion. This chain is Protein PERCC1, found in Mus musculus (Mouse).